Consider the following 223-residue polypeptide: Urease accessory protein UreF (223 aa).

It belongs to the UreF family. UreD, UreF and UreG form a complex that acts as a GTP-hydrolysis-dependent molecular chaperone, activating the urease apoprotein by helping to assemble the nickel containing metallocenter of UreC. The UreE protein probably delivers the nickel.

It is found in the cytoplasm. Required for maturation of urease via the functional incorporation of the urease nickel metallocenter. The protein is Urease accessory protein UreF of Rhizobium johnstonii (strain DSM 114642 / LMG 32736 / 3841) (Rhizobium leguminosarum bv. viciae).